Here is a 534-residue protein sequence, read N- to C-terminus: NAD(P)H-quinone oxidoreductase chain 4 2 (534 aa).

13 consecutive transmembrane segments (helical) span residues 6–26 (FPWLTTIILLPIVAALFIPLL), 38–58 (WYSLIVGLVDFILLVVAFWTS), 93–113 (LILLTGFISTLAMLAAWPVTF), 117–137 (FFYFLMLAMYGGQILVFAVQD), 138–158 (LLVFFFAWELELIPVYLLLAI), 171–191 (FILYTAGSSLFILVASLAMAF), 210–230 (IGFQLLLYAGFLIAYGVKLPI), 245–265 (TAPVHMLLAGILLKMGGYALF), 279–299 (FAPILVLLGVVNILYAALTSF), 313–333 (ISHMGFVLIGLGSFTQLGLSG), 335–355 (MLQMVSHGLIGASLFFLVGAT), 377–399 (MFAMWTTCAMASLALPGMSGFVA), and 419–439 (VVVISLAAIGVILTPIYLLSM).

Belongs to the complex I subunit 4 family.

Its subcellular location is the cellular thylakoid membrane. The catalysed reaction is a plastoquinone + NADH + (n+1) H(+)(in) = a plastoquinol + NAD(+) + n H(+)(out). It carries out the reaction a plastoquinone + NADPH + (n+1) H(+)(in) = a plastoquinol + NADP(+) + n H(+)(out). Functionally, NDH-1 shuttles electrons from NAD(P)H, via FMN and iron-sulfur (Fe-S) centers, to quinones in the respiratory chain. The immediate electron acceptor for the enzyme in this species is believed to be plastoquinone. Couples the redox reaction to proton translocation (for every two electrons transferred, four hydrogen ions are translocated across the cytoplasmic membrane), and thus conserves the redox energy in a proton gradient. This is NAD(P)H-quinone oxidoreductase chain 4 2 from Synechococcus elongatus (strain ATCC 33912 / PCC 7942 / FACHB-805) (Anacystis nidulans R2).